A 183-amino-acid chain; its full sequence is MAMPMPMPPPGPGGDAPPAPTMMPGMAMPMTTGMSFTWGHRAVVLFPRWPGDRAGVGMYFLCLLLVLALAALAEALSAASRRLDLDLDLSRSRGRRRRRRQQLLAAGVHAARMGLAYLVMLAVMSFNAGVLLAAVAGHAAGFLLARSGLLGSRAAAPEIDGAAAAAAATSNGSSLHPSSEPKP.

The segment at 1–21 (MAMPMPMPPPGPGGDAPPAPT) is disordered. A run of 2 helical transmembrane segments spans residues 56–76 (VGMY…AEAL) and 115–135 (LAYL…LAAV).

This sequence belongs to the copper transporter (Ctr) (TC 1.A.56) family. SLC31A subfamily.

It is found in the membrane. In terms of biological role, involved in the transport of copper. The sequence is that of Copper transporter 4 (COPT4) from Oryza sativa subsp. japonica (Rice).